The following is a 650-amino-acid chain: Rab proteins geranylgeranyltransferase component A 1 (650 aa).

2 disordered regions span residues 156 to 208 and 603 to 650; these read IPAE…ETPK and PAPP…EPSE. Residues 177-190 are compositionally biased toward basic and acidic residues; the sequence is ATGKKENSDAKSST. The span at 616 to 634 shows a compositional bias: polar residues; the sequence is DSSQQEVPESSVTPETNSE.

The protein belongs to the Rab GDI family. In terms of assembly, monomer. Heterotrimer composed of RABGGTA, RABGGTB and CHM; within this trimer, RABGGTA and RABGGTB form the catalytic component B, while CHM (component A) mediates Rab protein binding. Can associate with the Rab GGTase dimer (RGGT or component B) prior to Rab protein binding; the association is stabilized by geranylgeranyl pyrophosphate (GGpp). The CHM:RGGT:Rab complex is destabilized by GGpp. Interacts with RAB1A, RAB1B, RAB7A and RAB27A and mediates their prenylation. Interacts with RAB5A. Interacts with the non-phosphorylated forms of RAB3A, RAB3B, RAB3C, RAB3D, RAB5B, RAB5C RAB8A, RAB8B, RAB10, RAB12, RAB35, and RAB43. As to expression, most abundant in the heart, brain, and spleen. Lower levels seen in the lung, liver, muscle and kidney. Extremely low levels seen in the testis.

Its subcellular location is the cytoplasm. The protein localises to the cytosol. Functionally, substrate-binding subunit of the Rab geranylgeranyltransferase (GGTase) complex. Binds unprenylated Rab proteins and presents the substrate peptide to the catalytic component B composed of RABGGTA and RABGGTB, and remains bound to it after the geranylgeranyl transfer reaction. The component A is thought to be regenerated by transferring its prenylated Rab back to the donor membrane. Besides, a pre-formed complex consisting of CHM and the Rab GGTase dimer (RGGT or component B) can bind to and prenylate Rab proteins; this alternative pathway is proposed to be the predominant pathway for Rab protein geranylgeranylation. The polypeptide is Rab proteins geranylgeranyltransferase component A 1 (Chm) (Rattus norvegicus (Rat)).